The primary structure comprises 298 residues: N-acetylmuramic acid 6-phosphate etherase (298 aa).

In terms of domain architecture, SIS spans Ile-55–Lys-218. Glu-83 (proton donor) is an active-site residue. Glu-114 is a catalytic residue.

Belongs to the GCKR-like family. MurNAc-6-P etherase subfamily. As to quaternary structure, homodimer.

It carries out the reaction N-acetyl-D-muramate 6-phosphate + H2O = N-acetyl-D-glucosamine 6-phosphate + (R)-lactate. The protein operates within amino-sugar metabolism; 1,6-anhydro-N-acetylmuramate degradation. It participates in amino-sugar metabolism; N-acetylmuramate degradation. It functions in the pathway cell wall biogenesis; peptidoglycan recycling. Its function is as follows. Specifically catalyzes the cleavage of the D-lactyl ether substituent of MurNAc 6-phosphate, producing GlcNAc 6-phosphate and D-lactate. Together with AnmK, is also required for the utilization of anhydro-N-acetylmuramic acid (anhMurNAc) either imported from the medium or derived from its own cell wall murein, and thus plays a role in cell wall recycling. The chain is N-acetylmuramic acid 6-phosphate etherase from Escherichia coli (strain SMS-3-5 / SECEC).